Here is a 259-residue protein sequence, read N- to C-terminus: 4-hydroxy-tetrahydrodipicolinate reductase (259 aa).

9–14 serves as a coordination point for NAD(+); it reads GANGRM. Position 37 (R37) interacts with NADP(+). NAD(+) contacts are provided by residues 92–94 and 116–119; these read GTT and ASNM. H149 serves as the catalytic Proton donor/acceptor. (S)-2,3,4,5-tetrahydrodipicolinate is bound at residue H150. K153 functions as the Proton donor in the catalytic mechanism. 159 to 160 contacts (S)-2,3,4,5-tetrahydrodipicolinate; that stretch reads GT.

It belongs to the DapB family.

Its subcellular location is the cytoplasm. The catalysed reaction is (S)-2,3,4,5-tetrahydrodipicolinate + NAD(+) + H2O = (2S,4S)-4-hydroxy-2,3,4,5-tetrahydrodipicolinate + NADH + H(+). The enzyme catalyses (S)-2,3,4,5-tetrahydrodipicolinate + NADP(+) + H2O = (2S,4S)-4-hydroxy-2,3,4,5-tetrahydrodipicolinate + NADPH + H(+). The protein operates within amino-acid biosynthesis; L-lysine biosynthesis via DAP pathway; (S)-tetrahydrodipicolinate from L-aspartate: step 4/4. Catalyzes the conversion of 4-hydroxy-tetrahydrodipicolinate (HTPA) to tetrahydrodipicolinate. The protein is 4-hydroxy-tetrahydrodipicolinate reductase of Desulfovibrio desulfuricans (strain ATCC 27774 / DSM 6949 / MB).